A 469-amino-acid chain; its full sequence is Neuraminidase (469 aa).

At methionine 1–threonine 9 the chain is on the intravirion side. Residues isoleucine 10–valine 30 traverse the membrane as a helical segment. The tract at residues glycine 11–valine 33 is involved in apical transport and lipid raft association. The Virion surface portion of the chain corresponds to threonine 31–isoleucine 469. Residues asparagine 36 to serine 88 are hypervariable stalk region. 3 N-linked (GlcNAc...) asparagine; by host glycosylation sites follow: asparagine 61, asparagine 70, and asparagine 86. The segment at glutamine 91–isoleucine 469 is head of neuraminidase. 8 disulfide bridges follow: cysteine 92-cysteine 417, cysteine 124-cysteine 129, cysteine 183-cysteine 230, cysteine 232-cysteine 237, cysteine 278-cysteine 291, cysteine 280-cysteine 289, cysteine 318-cysteine 337, and cysteine 421-cysteine 447. Arginine 118 is a substrate binding site. Asparagine 146 carries N-linked (GlcNAc...) asparagine; by host glycosylation. Catalysis depends on aspartate 151, which acts as the Proton donor/acceptor. Residue arginine 152 participates in substrate binding. N-linked (GlcNAc...) asparagine; by host glycosylation is found at asparagine 200 and asparagine 234. A substrate-binding site is contributed by glutamate 276–glutamate 277. Substrate is bound at residue arginine 292. Residues aspartate 293 and glycine 297 each contribute to the Ca(2+) site. Asparagine 313 is a glycosylation site (N-linked (GlcNAc...) asparagine; by host). Aspartate 324 is a Ca(2+) binding site. Position 371 (arginine 371) interacts with substrate. A glycan (N-linked (GlcNAc...) asparagine; by host) is linked at asparagine 402. Tyrosine 406 (nucleophile) is an active-site residue.

Belongs to the glycosyl hydrolase 34 family. Homotetramer. Ca(2+) serves as cofactor. N-glycosylated.

It is found in the virion membrane. Its subcellular location is the host apical cell membrane. The enzyme catalyses Hydrolysis of alpha-(2-&gt;3)-, alpha-(2-&gt;6)-, alpha-(2-&gt;8)- glycosidic linkages of terminal sialic acid residues in oligosaccharides, glycoproteins, glycolipids, colominic acid and synthetic substrates.. Inhibited by the neuraminidase inhibitors zanamivir (Relenza) and oseltamivir (Tamiflu). These drugs interfere with the release of progeny virus from infected cells and are effective against all influenza strains. Resistance to neuraminidase inhibitors is quite rare. Catalyzes the removal of terminal sialic acid residues from viral and cellular glycoconjugates. Cleaves off the terminal sialic acids on the glycosylated HA during virus budding to facilitate virus release. Additionally helps virus spread through the circulation by further removing sialic acids from the cell surface. These cleavages prevent self-aggregation and ensure the efficient spread of the progeny virus from cell to cell. Otherwise, infection would be limited to one round of replication. Described as a receptor-destroying enzyme because it cleaves a terminal sialic acid from the cellular receptors. May facilitate viral invasion of the upper airways by cleaving the sialic acid moieties on the mucin of the airway epithelial cells. Likely to plays a role in the budding process through its association with lipid rafts during intracellular transport. May additionally display a raft-association independent effect on budding. Plays a role in the determination of host range restriction on replication and virulence. Sialidase activity in late endosome/lysosome traffic seems to enhance virus replication. This is Neuraminidase from Influenza A virus (strain A/Swine/Kanagawa/2/1978 H1N2).